A 174-amino-acid chain; its full sequence is Chorismate pyruvate-lyase (174 aa).

Methionine 36, arginine 78, leucine 116, and glutamate 157 together coordinate substrate.

Belongs to the UbiC family. Monomer.

The protein resides in the cytoplasm. It catalyses the reaction chorismate = 4-hydroxybenzoate + pyruvate. It participates in cofactor biosynthesis; ubiquinone biosynthesis. Its function is as follows. Removes the pyruvyl group from chorismate, with concomitant aromatization of the ring, to provide 4-hydroxybenzoate (4HB) for the ubiquinone pathway. This Serratia proteamaculans (strain 568) protein is Chorismate pyruvate-lyase.